We begin with the raw amino-acid sequence, 195 residues long: Shikimate kinase (195 aa).

31–36 (GAGKSC) lines the ATP pocket. S35 contributes to the Mg(2+) binding site. Substrate contacts are provided by D53, R77, and G99. Residue R137 participates in ATP binding. R156 contributes to the substrate binding site.

The protein belongs to the shikimate kinase family. In terms of assembly, monomer. Mg(2+) serves as cofactor.

The protein resides in the cytoplasm. The enzyme catalyses shikimate + ATP = 3-phosphoshikimate + ADP + H(+). It functions in the pathway metabolic intermediate biosynthesis; chorismate biosynthesis; chorismate from D-erythrose 4-phosphate and phosphoenolpyruvate: step 5/7. In terms of biological role, catalyzes the specific phosphorylation of the 3-hydroxyl group of shikimic acid using ATP as a cosubstrate. This chain is Shikimate kinase, found in Paramagnetospirillum magneticum (strain ATCC 700264 / AMB-1) (Magnetospirillum magneticum).